The sequence spans 259 residues: Indole-3-glycerol phosphate synthase (259 aa).

Belongs to the TrpC family.

It carries out the reaction 1-(2-carboxyphenylamino)-1-deoxy-D-ribulose 5-phosphate + H(+) = (1S,2R)-1-C-(indol-3-yl)glycerol 3-phosphate + CO2 + H2O. The protein operates within amino-acid biosynthesis; L-tryptophan biosynthesis; L-tryptophan from chorismate: step 4/5. This is Indole-3-glycerol phosphate synthase from Dehalococcoides mccartyi (strain ATCC BAA-2100 / JCM 16839 / KCTC 5957 / BAV1).